Reading from the N-terminus, the 120-residue chain is Protein ORF-C (120 aa).

It is found in the host mitochondrion. Induces alteration of mitochondrial function that results in apoptosis contributing to tumor regression. The protein is Protein ORF-C (orfC) of Walleye dermal sarcoma virus (WDSV).